A 209-amino-acid polypeptide reads, in one-letter code: Chaperone protein TorD (209 aa).

This sequence belongs to the TorD/DmsD family. TorD subfamily.

Its subcellular location is the cytoplasm. Functionally, involved in the biogenesis of TorA. Acts on TorA before the insertion of the molybdenum cofactor and, as a result, probably favors a conformation of the apoenzyme that is competent for acquiring the cofactor. The sequence is that of Chaperone protein TorD from Shewanella baltica (strain OS155 / ATCC BAA-1091).